A 207-amino-acid polypeptide reads, in one-letter code: uncharacterized protein (207 aa).

An N-terminal signal peptide occupies residues 1-19 (MRHGLLALICWLCCVVAHS).

The protein to P.aeruginosa PA4490 and T.maritima TM0986.

This is an uncharacterized protein from Escherichia coli (strain K12).